Here is a 313-residue protein sequence, read N- to C-terminus: Protein-glutamine deamidase Cif (313 aa).

Residues Cys-128, His-186, and Gln-205 contribute to the active site.

Belongs to the Cif family.

The protein resides in the secreted. It is found in the host nucleus. It carries out the reaction L-glutaminyl-[protein] + H2O = L-glutamyl-[protein] + NH4(+). In terms of biological role, protein-glutamine deamidase effector that inhibits the host cell cycle and other key cellular processes such as the actin network and programmed-cell death. Acts by mediating the side chain deamidation of 'Gln-40' of host NEDD8, converting it to glutamate, thereby abolishing the activity of cullin-RING-based E3 ubiquitin-protein ligase complexes (CRL complexes). Inactivation of CRL complexes prevents ubiquitination and subsequent degradation of the cyclin-dependent kinase inhibitors CDKN1A/p21 and CDKN1B/p27, leading to G1 and G2 cell cycle arrests in host cells. Deamidation of 'Gln-40' of host NEDD8 also triggers macrophage-specific programmed cell death. Also able to catalyze deamidation of 'Gln-40' of host ubiquitin in vitro; however, NEDD8 constitutes the preferred substrate in vivo. The sequence is that of Protein-glutamine deamidase Cif from Photorhabdus laumondii subsp. laumondii (strain DSM 15139 / CIP 105565 / TT01) (Photorhabdus luminescens subsp. laumondii).